The sequence spans 231 residues: ATP phosphoribosyltransferase (231 aa).

Belongs to the ATP phosphoribosyltransferase family. Short subfamily. As to quaternary structure, heteromultimer composed of HisG and HisZ subunits.

The protein resides in the cytoplasm. It carries out the reaction 1-(5-phospho-beta-D-ribosyl)-ATP + diphosphate = 5-phospho-alpha-D-ribose 1-diphosphate + ATP. Its pathway is amino-acid biosynthesis; L-histidine biosynthesis; L-histidine from 5-phospho-alpha-D-ribose 1-diphosphate: step 1/9. Functionally, catalyzes the condensation of ATP and 5-phosphoribose 1-diphosphate to form N'-(5'-phosphoribosyl)-ATP (PR-ATP). Has a crucial role in the pathway because the rate of histidine biosynthesis seems to be controlled primarily by regulation of HisG enzymatic activity. The polypeptide is ATP phosphoribosyltransferase (Brucella melitensis biotype 2 (strain ATCC 23457)).